Here is a 131-residue protein sequence, read N- to C-terminus: CDGSH iron-sulfur domain-containing protein 2 homolog (131 aa).

Residues 1-35 are Lumenal-facing; sequence MQSLSHAVKTSLPNYLSSLPVPDSVGGWFKLSFKD. Residues 36 to 58 traverse the membrane as a helical segment; that stretch reads WLALIPPTAVVVGIGYISYQALC. Residues 59 to 131 lie on the Cytoplasmic side of the membrane; the sequence is PAAQRKSCSG…NVGPVVIKRN (73 aa). Cys-97, Cys-99, Cys-108, and His-112 together coordinate [2Fe-2S] cluster.

This sequence belongs to the CISD protein family. CISD2 subfamily. [2Fe-2S] cluster serves as cofactor.

The protein resides in the endoplasmic reticulum membrane. This is CDGSH iron-sulfur domain-containing protein 2 homolog from Drosophila mojavensis (Fruit fly).